Here is a 210-residue protein sequence, read N- to C-terminus: Placenta-expressed transcript 1 protein (210 aa).

Residues 1 to 26 form the signal peptide; the sequence is MAVLGSPLLPLRLFLCFGLLFFSASC. Topologically, residues 27-189 are extracellular; the sequence is TDHPDQCMIF…THKNSANRVF (163 aa). Asn67 and Asn94 each carry an N-linked (GlcNAc...) asparagine glycan. The chain crosses the membrane as a helical span at residues 190–209; sequence RSPVRDAIQILLAFLTSKLL. A topological domain (cytoplasmic) is located at residue Phe210.

As to expression, highly expressed in placenta.

Its subcellular location is the membrane. It is found in the apical cell membrane. Modulates leading keratinocyte migration and cellular adhesion to matrix proteins during a wound-healing response and promotes wound repair. May play a role during trichilemmal differentiation of the hair follicle. This chain is Placenta-expressed transcript 1 protein (PLET1), found in Sus scrofa (Pig).